Consider the following 464-residue polypeptide: tRNA modification GTPase MnmE (464 aa).

(6S)-5-formyl-5,6,7,8-tetrahydrofolate contacts are provided by Arg-28, Glu-90, and Arg-129. One can recognise a TrmE-type G domain in the interval 226–385 (GLATAIVGRP…LEEKIAELFF (160 aa)). Asn-236 provides a ligand contact to K(+). GTP is bound by residues 236-241 (NVGKSS), 255-261 (TDIAGTT), and 280-283 (DTAG). Ser-240 provides a ligand contact to Mg(2+). The K(+) site is built by Thr-255, Ile-257, and Thr-260. Residue Thr-261 participates in Mg(2+) binding. Lys-464 provides a ligand contact to (6S)-5-formyl-5,6,7,8-tetrahydrofolate.

This sequence belongs to the TRAFAC class TrmE-Era-EngA-EngB-Septin-like GTPase superfamily. TrmE GTPase family. As to quaternary structure, homodimer. Heterotetramer of two MnmE and two MnmG subunits. The cofactor is K(+).

Its subcellular location is the cytoplasm. Exhibits a very high intrinsic GTPase hydrolysis rate. Involved in the addition of a carboxymethylaminomethyl (cmnm) group at the wobble position (U34) of certain tRNAs, forming tRNA-cmnm(5)s(2)U34. This Ligilactobacillus salivarius (strain UCC118) (Lactobacillus salivarius) protein is tRNA modification GTPase MnmE.